The chain runs to 370 residues: Chaperone protein DnaJ (370 aa).

The J domain maps to 6–70 (DYYEVLGVQR…EKRSMYDRFG (65 aa)). The segment at 128–208 (GVEKTIEYRR…CRGEGRIRQT (81 aa)) adopts a CR-type zinc-finger fold. 8 residues coordinate Zn(2+): C141, C144, C158, C161, C182, C185, C196, and C199. 4 CXXCXGXG motif repeats span residues 141–148 (CPACRGSG), 158–165 (CPKCGGLG), 182–189 (CDMCRGEG), and 196–203 (CRECRGEG).

It belongs to the DnaJ family. As to quaternary structure, homodimer. Requires Zn(2+) as cofactor.

It is found in the cytoplasm. Participates actively in the response to hyperosmotic and heat shock by preventing the aggregation of stress-denatured proteins and by disaggregating proteins, also in an autonomous, DnaK-independent fashion. Unfolded proteins bind initially to DnaJ; upon interaction with the DnaJ-bound protein, DnaK hydrolyzes its bound ATP, resulting in the formation of a stable complex. GrpE releases ADP from DnaK; ATP binding to DnaK triggers the release of the substrate protein, thus completing the reaction cycle. Several rounds of ATP-dependent interactions between DnaJ, DnaK and GrpE are required for fully efficient folding. Also involved, together with DnaK and GrpE, in the DNA replication of plasmids through activation of initiation proteins. In Roseiflexus castenholzii (strain DSM 13941 / HLO8), this protein is Chaperone protein DnaJ.